The chain runs to 94 residues: Pyrimidine/purine nucleoside phosphorylase (94 aa).

This sequence belongs to the nucleoside phosphorylase PpnP family.

It carries out the reaction a purine D-ribonucleoside + phosphate = a purine nucleobase + alpha-D-ribose 1-phosphate. It catalyses the reaction adenosine + phosphate = alpha-D-ribose 1-phosphate + adenine. The enzyme catalyses cytidine + phosphate = cytosine + alpha-D-ribose 1-phosphate. The catalysed reaction is guanosine + phosphate = alpha-D-ribose 1-phosphate + guanine. It carries out the reaction inosine + phosphate = alpha-D-ribose 1-phosphate + hypoxanthine. It catalyses the reaction thymidine + phosphate = 2-deoxy-alpha-D-ribose 1-phosphate + thymine. The enzyme catalyses uridine + phosphate = alpha-D-ribose 1-phosphate + uracil. The catalysed reaction is xanthosine + phosphate = alpha-D-ribose 1-phosphate + xanthine. Functionally, catalyzes the phosphorolysis of diverse nucleosides, yielding D-ribose 1-phosphate and the respective free bases. Can use uridine, adenosine, guanosine, cytidine, thymidine, inosine and xanthosine as substrates. Also catalyzes the reverse reactions. This Salmonella newport (strain SL254) protein is Pyrimidine/purine nucleoside phosphorylase.